The chain runs to 353 residues: Tectonin-2 (353 aa).

Positions 44–93 constitute a Ricin B-type lectin domain; sequence WIFDNDGYIRLAANHNLVLDVNGGAAKEGNTVLSYPDKKDHAKNQLWVNK. 6 repeat units span residues 138–173, 174–210, 211–247, 248–282, 283–318, and 319–353. The segment at 138–353 is 6 X approximate tandem repeats; it reads SAWERHEGEL…SAHNIYKALL (216 aa).

It belongs to the tectonin family.

It is found in the cell surface. Its subcellular location is the cytoplasmic vesicle membrane. Its function is as follows. Probably involved in bacterial recognition. May be a lectin that function as part of a transmembrane signaling complex during phagocytosis. The polypeptide is Tectonin-2 (TECB) (Physarum polycephalum (Slime mold)).